Consider the following 414-residue polypeptide: uncharacterized protein (414 aa).

The signal sequence occupies residues 1-20 (MKKLLAIGILCIMVTAVMSG). Residue Cys-21 is the site of S-archaeol cysteine attachment. The Fe/B12 periplasmic-binding domain occupies 119 to 389 (RVIVMSSTEI…DLATILHPEA (271 aa)).

The protein localises to the cell membrane. This is an uncharacterized protein from Methanocaldococcus jannaschii (strain ATCC 43067 / DSM 2661 / JAL-1 / JCM 10045 / NBRC 100440) (Methanococcus jannaschii).